The sequence spans 206 residues: Small ribosomal subunit protein uS4 (206 aa).

The 61-residue stretch at 96 to 156 folds into the S4 RNA-binding domain; the sequence is TRLDNVVYRM…EKSRTQARIK (61 aa).

Belongs to the universal ribosomal protein uS4 family. Part of the 30S ribosomal subunit. Contacts protein S5. The interaction surface between S4 and S5 is involved in control of translational fidelity.

Its function is as follows. One of the primary rRNA binding proteins, it binds directly to 16S rRNA where it nucleates assembly of the body of the 30S subunit. Functionally, with S5 and S12 plays an important role in translational accuracy. The polypeptide is Small ribosomal subunit protein uS4 (Shewanella baltica (strain OS223)).